Here is a 347-residue protein sequence, read N- to C-terminus: GMP reductase (347 aa).

108–131 contacts NADP(+); the sequence is ADFQKTKDVMALSDELIFICIDIA. Residues Gly181 and Gly183 each contribute to the K(+) site. Cys186 (thioimidate intermediate) is an active-site residue. 216-239 is a binding site for NADP(+); the sequence is IIGDGGCTCPGDVAKAFGGGADFV.

It belongs to the IMPDH/GMPR family. GuaC type 1 subfamily. In terms of assembly, homotetramer.

The enzyme catalyses IMP + NH4(+) + NADP(+) = GMP + NADPH + 2 H(+). Its function is as follows. Catalyzes the irreversible NADPH-dependent deamination of GMP to IMP. It functions in the conversion of nucleobase, nucleoside and nucleotide derivatives of G to A nucleotides, and in maintaining the intracellular balance of A and G nucleotides. This Vibrio cholerae serotype O1 (strain ATCC 39541 / Classical Ogawa 395 / O395) protein is GMP reductase.